The sequence spans 564 residues: Benomyl/methotrexate resistance protein (564 aa).

The segment at 60-101 is disordered; that stretch reads IDNQGEPNSSQSSSSNNTIVDNNNNNNNDVDGDKIVVTWDGD. Over residues 67–88 the composition is skewed to low complexity; that stretch reads NSSQSSSSNNTIVDNNNNNNND. A run of 12 helical transmembrane segments spans residues 116 to 136, 153 to 173, 184 to 204, 210 to 229, 241 to 262, 274 to 294, 358 to 374, 393 to 411, 431 to 451, 457 to 476, 489 to 506, and 530 to 551; these read AFFIFQISFLTTSVYMGSAVY, VATLPLTLFVIGYGVGPLVFS, TSIYIITLFLFVILQIPTALV, LCILRFLGGFFASPCLATGG, LPVGLAAWSLGAVCGPSFGPFF, WTFWFMCIISGFSFVMLCFTL, IYIAMVYSILYLFFEVF, YMSIVIGIVIAAFIYIPVI, IPIAIVGGILLTSGLFIFGWS, HWVGPLFGAATTASGAFLIF, PHYIASVFASNDLFRSVI, and WGSSVLGFITLVMIAIPVLFYL.

The protein belongs to the major facilitator superfamily. CAR1 family.

It localises to the membrane. Functionally, probable transporter. Confers resistance to benomyl and methotrexate. In Candida albicans (Yeast), this protein is Benomyl/methotrexate resistance protein (MDR1).